The primary structure comprises 59 residues: Conorfamide-Ep1 (59 aa).

The N-terminal stretch at 1 to 19 (MSGCGFLLLALLLLVTVEA) is a signal peptide. A propeptide spanning residues 20–25 (TKMEKK) is cleaved from the precursor. The residue at position 43 (I43) is an Isoleucine amide. Residues 45-59 (RRDMQSPLLSERLRF) constitute a propeptide that is removed on maturation.

It belongs to the FARP (FMRFamide related peptide) family. As to expression, expressed by the venom duct.

It localises to the secreted. Functionally, neurotoxin that is active on vertebrates. When tested at high doses (10 uM), the toxin affects all zebrafish and mouse DRG neurons in culture, which could be an indication of an effect on a widely expressed receptor or ion channel found in both species. At low doses (1 uM), the effects of the toxin are confined to a specific subpopulation of zebrafish and mouse DRG neurons. In vivo, it induces long-lasting dramatic alterations in the locomotor behavior of zebrafish larvae. It rapidly induces hypoactivity and death of larvae at high doses and it causes hyperactivity at lower doses. In zebrafish adults, intramuscular injection causes the decrease of the movements and visited spaces. In mice, intracranial injection causes lethargy and prolonges sleeping phases and reduced movement. The protein is Conorfamide-Ep1 of Conus episcopatus (Bishop's cone).